Reading from the N-terminus, the 182-residue chain is Dirigent protein 1 (182 aa).

An N-terminal signal peptide occupies residues 1–24 (MAKRFLLLLPLLSSILLLAVSVTA). The N-linked (GlcNAc...) asparagine glycan is linked to asparagine 125.

It belongs to the plant dirigent protein family. As to quaternary structure, homodimer.

It localises to the secreted. It is found in the extracellular space. Its subcellular location is the apoplast. Its function is as follows. Dirigent proteins impart stereoselectivity on the phenoxy radical-coupling reaction, yielding optically active lignans from two molecules of coniferyl alcohol in the biosynthesis of lignans, flavonolignans, and alkaloids and thus plays a central role in plant secondary metabolism. This Arabidopsis thaliana (Mouse-ear cress) protein is Dirigent protein 1 (DIR1).